The chain runs to 291 residues: Lys-63-specific deubiquitinase BRCC36 (291 aa).

Ala2 carries the post-translational modification N-acetylalanine. One can recognise an MPN domain in the interval 12 to 179 (VHLESDAFLV…YTCFQSIQAQ (168 aa)). Zn(2+) is bound by residues His122, His124, and Asp135. Residues 122–135 (HSHPHITVWPSHVD) carry the JAMM motif motif. At Ser233 the chain carries Phosphoserine.

Belongs to the peptidase M67A family. BRCC36 subfamily. As to quaternary structure, component of the ARISC complex, at least composed of UIMC1/RAP80, ABRAXAS1, BRCC3/BRCC36, BABAM2 and BABAM1/NBA1. Component of the BRCA1-A complex, at least composed of BRCA1, BARD1, UIMC1/RAP80, ABRAXAS1, BRCC3/BRCC36, BABAM2 and BABAM1/NBA1. In the BRCA1-A complex, interacts directly with ABRAXAS1 and BABAM2. Component of the BRISC complex, at least composed of ABRAXAS2, BRCC3/BRCC36, BABAM2 and BABAM1/NBA1. Identified in a complex with SHMT2 and the other subunits of the BRISC complex. In the BRISC complex, interacts directly with ABRAXAS2. Identified in a complex with ABRAXAS2 and NUMA1. The BRISC complex interacts with the CSN complex. Component of the BRCA1/BRCA2 containing complex (BRCC), which also contains BRCA1, BRCA2, BARD1, BABAM2 and RAD51. BRCC is a ubiquitin E3 ligase complex that enhances cellular survival following DNA damage. Interacts with BRCA1. Binds polyubiquitin. Interacts with PWWP2B. Interacts with HDAC1; this interaction is enhanced in the presence of PWWP2B. Zn(2+) is required as a cofactor.

Its subcellular location is the nucleus. It is found in the cytoplasm. The protein localises to the cytoskeleton. It localises to the spindle pole. In terms of biological role, metalloprotease that specifically cleaves 'Lys-63'-linked polyubiquitin chains. Does not have activity toward 'Lys-48'-linked polyubiquitin chains. Component of the BRCA1-A complex, a complex that specifically recognizes 'Lys-63'-linked ubiquitinated histones H2A and H2AX at DNA lesions sites, leading to target the BRCA1-BARD1 heterodimer to sites of DNA damage at double-strand breaks (DSBs). In the BRCA1-A complex, it specifically removes 'Lys-63'-linked ubiquitin on histones H2A and H2AX, antagonizing the RNF8-dependent ubiquitination at double-strand breaks (DSBs). Catalytic subunit of the BRISC complex, a multiprotein complex that specifically cleaves 'Lys-63'-linked ubiquitin in various substrates. Mediates the specific 'Lys-63'-specific deubiquitination associated with the COP9 signalosome complex (CSN), via the interaction of the BRISC complex with the CSN complex. The BRISC complex is required for normal mitotic spindle assembly and microtubule attachment to kinetochores via its role in deubiquitinating NUMA1. Plays a role in interferon signaling via its role in the deubiquitination of the interferon receptor IFNAR1; deubiquitination increases IFNAR1 activity by enhancing its stability and cell surface expression. Acts as a regulator of the NLRP3 inflammasome by mediating deubiquitination of NLRP3, leading to NLRP3 inflammasome assembly. Down-regulates the response to bacterial lipopolysaccharide (LPS) via its role in IFNAR1 deubiquitination. Deubiquitinates HDAC1 and PWWP2B leading to their stabilization. This is Lys-63-specific deubiquitinase BRCC36 (Brcc3) from Mus musculus (Mouse).